The primary structure comprises 458 residues: Histone acetyltransferase KAT8 (458 aa).

2 stretches are compositionally biased toward low complexity: residues 1-17 (MAAQ…TSGT) and 25-35 (PGENAAVEGPA). The segment at 1–52 (MAAQGATAAVAATTSGTVGEGEPGPGENAAVEGPARSPGRVSPPTPARGEPE) is disordered. N-acetylalanine is present on Ala2. A phosphoserine mark is found at Ser37 and Ser42. A Tudor-knot domain is found at 55-110 (VEIGETYLCRRPDSTWHSAEVIQSRVNDQEGREEFYVHYVGFNRRLDEWVDKNRLA). Lys113 carries the N6-acetyllysine modification. The short motif at 140-149 (RNQKRKHDEI) is the Nuclear localization signal element. Positions 174–447 (TKVKYVDKIH…VDSVCLKWAP (274 aa)) constitute an MYST-type HAT domain. The sufficient for interaction with KANSL1 stretch occupies residues 174 to 458 (TKVKYVDKIH…KHKQVKLSKK (285 aa)). The segment at 207–232 (LWLCEYCLKYMKFEKSYRFHLGQCQW) adopts a C2HC MYST-type zinc-finger fold. 4 residues coordinate Zn(2+): Cys210, Cys213, His226, and Cys230. N6-acetyllysine is present on Lys274. The acetyl-CoA site is built by Ile317, Thr319, Arg325, Arg326, Gly327, Gly329, and Lys330. Phosphoserine is present on Ser348. The active-site Proton donor/acceptor is Glu350. Acetyl-CoA contacts are provided by Ser354, Ser363, Tyr408, and Lys432.

It belongs to the MYST (SAS/MOZ) family. Component of a multisubunit histone acetyltransferase complex (MSL) at least composed of the MOF/KAT8, MSL1/hampin, MSL2L1 and MSL3L1. Component of the NSL complex at least composed of MOF/KAT8, KANSL1, KANSL2, KANSL3, MCRS1, PHF20, OGT1/OGT, WDR5 and HCFC1. Component of some MLL1/MLL complex, at least composed of the core components KMT2A/MLL1, ASH2L, HCFC1, WDR5 and RBBP5, as well as the facultative components BACC1, CHD8, E2F6, HSP70, INO80C, KANSL1, LAS1L, MAX, MCRS1, MGA, MOF/KAT8, PELP1, PHF20, PRP31, RING2, RUVB1/TIP49A, RUVB2/TIP49B, SENP3, TAF1, TAF4, TAF6, TAF7, TAF9 and TEX10. Interacts with the chromodomain of MORF4L1/MRG15. Interacts with ATM (via its Tudor-knot domain); possibly regulating the activity of ATM. Interacts with NELFD. Acetylation at Lys-274 facilitates cognate substrate Lys-binding and acetylation. Although considered as an autoacetylation event, acetylation at Lys-274 probably takes place via a non-enzymatic process following acetyl-CoA-binding, which primes KAT8 for cognate protein-lysine acetylation. As to expression, during oocyte development, expressed in both oocytes and granulosa cells.

It localises to the nucleus. Its subcellular location is the chromosome. It is found in the mitochondrion. The catalysed reaction is L-lysyl-[histone] + acetyl-CoA = N(6)-acetyl-L-lysyl-[histone] + CoA + H(+). The enzyme catalyses L-lysyl-[protein] + acetyl-CoA = N(6)-acetyl-L-lysyl-[protein] + CoA + H(+). It catalyses the reaction propanoyl-CoA + L-lysyl-[protein] = N(6)-propanoyl-L-lysyl-[protein] + CoA + H(+). Its activity is regulated as follows. The acetyltransferase activity is inhibited by anacardic acid derivatives. Functionally, histone acetyltransferase that catalyzes histone H4 acetylation at 'Lys-5'- and 'Lys-8' (H4K5ac and H4K8ac) or 'Lys-16' (H4K16ac), depending on the context. Catalytic component of the MSL histone acetyltransferase complex, a multiprotein complex that mediates the majority of histone H4 acetylation at 'Lys-16' (H4K16ac), an epigenetic mark that prevents chromatin compaction. H4K16ac constitutes the only acetylation mark intergenerationally transmitted and regulates key biological processes, such as oogenesis, embryonic stem cell pluripotency, hematopoiesis or glucose metabolism. The MSL complex is required for chromosome stability and genome integrity by maintaining homeostatic levels of H4K16ac. The MSL complex is also involved in gene dosage by promoting up-regulation of genes expressed by the X chromosome. X up-regulation is required to compensate for autosomal biallelic expression. The MSL complex also participates in gene dosage compensation by promoting expression of Tsix non-coding RNA. As part of the NSL histone acetyltransferase complex, catalyzes histone H4 acetylation at 'Lys-5'- and 'Lys-8' (H4K5ac and H4K8ac) at transcription start sites and promotes transcription initiation. The NSL complex also acts as a regulator of gene expression in mitochondria: KAT8 associates with mitochondrial DNA and controls expression of respiratory genes in an acetyltransferase-dependent mechanism. Also functions as an acetyltransferase for non-histone targets, such as ALKBH5, COX17, IRF3, KDM1A/LSD1, LMNA, PAX7 or TP53/p53. Acts as an inhibitor of antiviral immunity by acetylating IRF3, preventing IRF3 recruitment to promoters. Acts as a regulator of asymmetric division in muscle stem cells by mediating acetylation of PAX7. As part of the NSL complex, acetylates TP53/p53 at 'Lys-120'. Acts as a regulator of epithelial-to-mesenchymal transition as part of the NSL complex by mediating acetylation of KDM1A/LSD1. The NSL complex is required for nuclear architecture maintenance by mediating acetylation of LMNA. Promotes mitochondrial integrity by catalyzing acetylation of COX17. In addition to protein acetyltransferase activity, able to mediate protein propionylation. This chain is Histone acetyltransferase KAT8, found in Mus musculus (Mouse).